The primary structure comprises 49 residues: uncharacterized protein (49 aa).

This sequence belongs to the ELIP/psbS family.

It is found in the plastid. The protein localises to the cyanelle. Its function is as follows. Possible role in chlorophyll and/or carotenoid binding. This is an uncharacterized protein from Cyanophora paradoxa.